We begin with the raw amino-acid sequence, 967 residues long: RNA polymerase II C-terminal domain phosphatase-like 1 (967 aa).

A Nuclear localization signal (NLS) motif is present at residues 38–41; sequence RKKK. Residues 151 to 401 enclose the FCP1 homology domain; sequence LNLRCLGIVF…TPVLCVARNV (251 aa). 2 disordered regions span residues 548–611 and 643–712; these read SEPS…VQSR and MEKH…RNSD. Residues 590–603 are compositionally biased toward pro residues; the sequence is PSEPSFPQRPPVQA. Positions 665–684 are enriched in basic and acidic residues; sequence RMLHENRRPPKESLRRDEQL. 2 DRBM domains span residues 724–792 and 855–925; these read TETS…NLAD and GSIT…SVRS. The interval 928–967 is disordered; the sequence is GQPLHKRQGSPRSFGGMSNKRLKPDFQRSLQRMPSSGRYS. Residues 945-967 form a required for nuclear localization (NLS) region; that stretch reads SNKRLKPDFQRSLQRMPSSGRYS. The Nuclear localization signal (NLS) signature appears at 947-951; sequence KRLKP. A compositionally biased stretch (polar residues) spans 955-967; the sequence is RSLQRMPSSGRYS.

As to quaternary structure, interacts with FREE1, ANAC019, MYB3, MYB4 and MYB32. Binds to DMS3. Interacts with RCF3. Interacts with RS40 and RS41. Interacts with EIF4A3. Interacts with UPF3. Mg(2+) is required as a cofactor. The cofactor is Co(2+). It depends on Mn(2+) as a cofactor. Expressed at very low levels in roots, leaves, stems, flowers and siliques.

The protein resides in the nucleus. It is found in the nucleus speckle. The enzyme catalyses O-phospho-L-seryl-[protein] + H2O = L-seryl-[protein] + phosphate. It carries out the reaction O-phospho-L-threonyl-[protein] + H2O = L-threonyl-[protein] + phosphate. Its function is as follows. Processively dephosphorylates 'Ser-5' but not 'Ser-2' of the heptad repeats YSPTSPS in the C-terminal domain of the largest RNA polymerase II subunit (RPB1). This promotes the activity of RNA polymerase II. Together with CPL2, required for male gametes fertility. Multifunctional regulator that modulates plant growth, stress, and phytohormones responses. Negative regulator of stress gene transcription involved in abscisic acid (ABA) mediated and jasmonic acid (JA) mediated signaling pathways, NaCl, osmotic stress, wounding, and cold resistance. Negatively regulates the expression of jasmonic acid (JA) biosynthetic genes in response to wounding. Forms a complex with RCF3 that modulates co-transcriptional processes such as mRNA capping and polyadenylation, and functions to repress stress-inducible gene expression. Dephosphorylates RCF3. Involved in the dephosphorylation of EIF4A3. This dephosphorylation retains EIF4A3 in the nucleus and limits its accumulation in the cytoplasm. Is essential for the degradation of the nonsense-mediated mRNA decay (NMD) transcripts. This chain is RNA polymerase II C-terminal domain phosphatase-like 1, found in Arabidopsis thaliana (Mouse-ear cress).